The following is a 110-amino-acid chain: MSDTLNQLAEVLEARKNAAPDSSYVASLYHKGLNKILEKVGEESVETILAAKDAAASGDCSELIYETADLWFHSLVMLAALGQHPQAVLDELERRFGLSGHAEKAARPKS.

This sequence belongs to the PRA-PH family.

The protein resides in the cytoplasm. The catalysed reaction is 1-(5-phospho-beta-D-ribosyl)-ATP + H2O = 1-(5-phospho-beta-D-ribosyl)-5'-AMP + diphosphate + H(+). It participates in amino-acid biosynthesis; L-histidine biosynthesis; L-histidine from 5-phospho-alpha-D-ribose 1-diphosphate: step 2/9. The chain is Phosphoribosyl-ATP pyrophosphatase (hisE) from Azotobacter chroococcum mcd 1.